The chain runs to 228 residues: L-ribulose-5-phosphate 4-epimerase UlaF (228 aa).

Substrate contacts are provided by residues 26 to 27, 43 to 44, and 72 to 73; these read GN, SG, and SS. The Zn(2+) site is built by D74, H93, and H95. D118 (proton donor/acceptor) is an active-site residue. H167 serves as a coordination point for Zn(2+). Y225 (proton donor/acceptor) is an active-site residue.

The protein belongs to the aldolase class II family. AraD/FucA subfamily. Zn(2+) serves as cofactor.

The catalysed reaction is L-ribulose 5-phosphate = D-xylulose 5-phosphate. It participates in cofactor degradation; L-ascorbate degradation; D-xylulose 5-phosphate from L-ascorbate: step 4/4. Functionally, catalyzes the isomerization of L-ribulose 5-phosphate to D-xylulose 5-phosphate. Is involved in the anaerobic L-ascorbate utilization. The protein is L-ribulose-5-phosphate 4-epimerase UlaF of Escherichia coli O81 (strain ED1a).